Consider the following 475-residue polypeptide: Trifunctional enzyme subunit beta, mitochondrial (475 aa).

The N-terminal 34 residues, 1–34 (MTTILTCPFKKLPTTSKWALRFAIRPLSCSSQLR), are a transit peptide targeting the mitochondrion. N6-acetyllysine; alternate is present on Lys73. Lys73 is subject to N6-succinyllysine; alternate. Catalysis depends on Cys139, which acts as the Acyl-thioester intermediate. Residues 174–221 (IRHSRKMRKLMLDLNKAKSMGQRLSLISKFRLNFLAPELPAVAEFSTS) lie within the membrane without spanning it. An N6-acetyllysine; alternate modification is found at Lys189. Position 189 is an N6-succinyllysine; alternate (Lys189). 3 positions are modified to N6-succinyllysine: Lys191, Lys273, and Lys292. Residue Lys294 is modified to N6-acetyllysine; alternate. N6-succinyllysine; alternate is present on Lys294. Lys299 is modified (N6-acetyllysine). An N6-acetyllysine; alternate modification is found at Lys333. Residue Lys333 is modified to N6-succinyllysine; alternate. 2 positions are modified to N6-acetyllysine: Lys349 and Lys362. The active-site Proton donor/acceptor is Cys459.

The protein belongs to the thiolase-like superfamily. Thiolase family. Heterotetramer of 2 alpha/HADHA and 2 beta/HADHB subunits; forms the mitochondrial trifunctional enzyme. Also purified as higher order heterooligomers including a 4 alpha/HADHA and 4 beta/HADHB heterooligomer which physiological significance remains unclear. The mitochondrial trifunctional enzyme interacts with MTLN. Interacts with RSAD2/viperin.

It is found in the mitochondrion. It localises to the mitochondrion inner membrane. Its subcellular location is the mitochondrion outer membrane. The protein resides in the endoplasmic reticulum. It catalyses the reaction an acyl-CoA + acetyl-CoA = a 3-oxoacyl-CoA + CoA. It carries out the reaction butanoyl-CoA + acetyl-CoA = 3-oxohexanoyl-CoA + CoA. The catalysed reaction is hexanoyl-CoA + acetyl-CoA = 3-oxooctanoyl-CoA + CoA. The enzyme catalyses octanoyl-CoA + acetyl-CoA = 3-oxodecanoyl-CoA + CoA. It catalyses the reaction decanoyl-CoA + acetyl-CoA = 3-oxododecanoyl-CoA + CoA. It carries out the reaction dodecanoyl-CoA + acetyl-CoA = 3-oxotetradecanoyl-CoA + CoA. The catalysed reaction is tetradecanoyl-CoA + acetyl-CoA = 3-oxohexadecanoyl-CoA + CoA. Its pathway is lipid metabolism; fatty acid beta-oxidation. Functionally, mitochondrial trifunctional enzyme catalyzes the last three of the four reactions of the mitochondrial beta-oxidation pathway. The mitochondrial beta-oxidation pathway is the major energy-producing process in tissues and is performed through four consecutive reactions breaking down fatty acids into acetyl-CoA. Among the enzymes involved in this pathway, the trifunctional enzyme exhibits specificity for long-chain fatty acids. Mitochondrial trifunctional enzyme is a heterotetrameric complex composed of two proteins, the trifunctional enzyme subunit alpha/HADHA carries the 2,3-enoyl-CoA hydratase and the 3-hydroxyacyl-CoA dehydrogenase activities, while the trifunctional enzyme subunit beta/HADHB described here bears the 3-ketoacyl-CoA thiolase activity. The protein is Trifunctional enzyme subunit beta, mitochondrial (HADHB) of Macaca fascicularis (Crab-eating macaque).